The chain runs to 219 residues: Small ribosomal subunit protein uS3c (219 aa).

The KH type-2 domain maps to 43 to 120 (IQNYIQKNMQ…KINITITKIT (78 aa)).

It belongs to the universal ribosomal protein uS3 family. In terms of assembly, part of the 30S ribosomal subunit.

Its subcellular location is the plastid. The protein resides in the chloroplast. The polypeptide is Small ribosomal subunit protein uS3c (rps3) (Oenothera elata subsp. hookeri (Hooker's evening primrose)).